The chain runs to 280 residues: Phosphatidylglycerol--prolipoprotein diacylglyceryl transferase (280 aa).

2 helical membrane-spanning segments follow: residues 59–79 (FLTW…ILFY) and 97–117 (GGMS…LFTW). Arg-142 contacts a 1,2-diacyl-sn-glycero-3-phospho-(1'-sn-glycerol). Transmembrane regions (helical) follow at residues 207–227 (GFLA…CECF) and 233–253 (FIGF…PMAI).

It belongs to the Lgt family.

The protein localises to the cell inner membrane. The enzyme catalyses L-cysteinyl-[prolipoprotein] + a 1,2-diacyl-sn-glycero-3-phospho-(1'-sn-glycerol) = an S-1,2-diacyl-sn-glyceryl-L-cysteinyl-[prolipoprotein] + sn-glycerol 1-phosphate + H(+). It participates in protein modification; lipoprotein biosynthesis (diacylglyceryl transfer). Catalyzes the transfer of the diacylglyceryl group from phosphatidylglycerol to the sulfhydryl group of the N-terminal cysteine of a prolipoprotein, the first step in the formation of mature lipoproteins. In Gluconacetobacter diazotrophicus (strain ATCC 49037 / DSM 5601 / CCUG 37298 / CIP 103539 / LMG 7603 / PAl5), this protein is Phosphatidylglycerol--prolipoprotein diacylglyceryl transferase.